Reading from the N-terminus, the 289-residue chain is SNF1-related protein kinase regulatory subunit beta-2 (289 aa).

Positions 1–10 (MGNVNAREEA) are enriched in basic and acidic residues. A disordered region spans residues 1–59 (MGNVNAREEANSNNASAVEDEDAEICSREAMSAASDGNHVAPPELMGQSPPHSPRATQS). The N-myristoyl glycine moiety is linked to residue Gly2. The segment at 103-180 (PTMITWCHGG…AGNTFNILDL (78 aa)) is kinase-interacting sequence (KIS). The interval 217–289 (EPPVVPPHLQ…TVVLYKSLQR (73 aa)) is association with SNF1 complex (ASC).

This sequence belongs to the 5'-AMP-activated protein kinase beta subunit family. Subunit of a probable heterotrimeric complex consisting of an alpha catalytic (KIN10 or KIN11) subunit, and a beta (KINB) and a gamma (KING or SNF4) non-catalytic regulatory subunits. Interacts with SNF4. Interacts with FLZ1, FLZ2, FLZ8, FLZ9, FLZ10, FLZ12, FLZ13 and FLZ14. In terms of processing, sumoylated. As to expression, expressed in leaves, stems, roots, flower buds and flowers. Not detectable in siliques.

The protein localises to the cell membrane. Regulatory subunit of the probable trimeric SNF1-related protein kinase (SnRK) complex, which may play a role in a signal transduction cascade regulating gene expression and carbohydrate metabolism in higher plants. The SnRK complex may also be involved in the regulation of fatty acid synthesis by phosphorylation of acetyl-CoA carboxylase and in assimilation of nitrogen by phosphorylating nitrate reductase. In Arabidopsis thaliana (Mouse-ear cress), this protein is SNF1-related protein kinase regulatory subunit beta-2 (KINB2).